Consider the following 243-residue polypeptide: uncharacterized protein (243 aa).

A Bipartite nuclear localization signal motif is present at residues 207-224; the sequence is KKTSISGYKTLDVKRKFV.

This is an uncharacterized protein from Acheta domesticus (House cricket).